The following is a 249-amino-acid chain: tRNA pseudouridine synthase A (249 aa).

The active-site Nucleophile is the Asp-53. Tyr-111 provides a ligand contact to substrate.

It belongs to the tRNA pseudouridine synthase TruA family. As to quaternary structure, homodimer.

The catalysed reaction is uridine(38/39/40) in tRNA = pseudouridine(38/39/40) in tRNA. Functionally, formation of pseudouridine at positions 38, 39 and 40 in the anticodon stem and loop of transfer RNAs. The chain is tRNA pseudouridine synthase A from Streptococcus gordonii (strain Challis / ATCC 35105 / BCRC 15272 / CH1 / DL1 / V288).